Consider the following 433-residue polypeptide: ATP-dependent protease ATPase subunit HslU (433 aa).

ATP-binding positions include V18, 60 to 65 (GVGKTE), D246, E311, and R383.

It belongs to the ClpX chaperone family. HslU subfamily. A double ring-shaped homohexamer of HslV is capped on each side by a ring-shaped HslU homohexamer. The assembly of the HslU/HslV complex is dependent on binding of ATP.

It localises to the cytoplasm. Functionally, ATPase subunit of a proteasome-like degradation complex; this subunit has chaperone activity. The binding of ATP and its subsequent hydrolysis by HslU are essential for unfolding of protein substrates subsequently hydrolyzed by HslV. HslU recognizes the N-terminal part of its protein substrates and unfolds these before they are guided to HslV for hydrolysis. The sequence is that of ATP-dependent protease ATPase subunit HslU from Nitrobacter winogradskyi (strain ATCC 25391 / DSM 10237 / CIP 104748 / NCIMB 11846 / Nb-255).